A 181-amino-acid chain; its full sequence is Cytidylate kinase (181 aa).

An ATP-binding site is contributed by 12–20 (GLAGSGTTT).

This sequence belongs to the cytidylate kinase family. Type 2 subfamily.

The protein resides in the cytoplasm. The catalysed reaction is CMP + ATP = CDP + ADP. The enzyme catalyses dCMP + ATP = dCDP + ADP. This chain is Cytidylate kinase (cmk), found in Pyrococcus abyssi (strain GE5 / Orsay).